Here is a 361-residue protein sequence, read N- to C-terminus: UPF0283 membrane protein Smed_1530 (361 aa).

The disordered stretch occupies residues 1–40 (MNDDSNGRRRRPAAFPVGTEDATSRELEQTPRRAPGSFSD). Positions 22–31 (ATSRELEQTP) are enriched in basic and acidic residues. The next 2 membrane-spanning stretches (helical) occupy residues 76–96 (FGKI…GLWV) and 109–129 (WLGY…LIVV).

It belongs to the UPF0283 family.

It is found in the cell inner membrane. In Sinorhizobium medicae (strain WSM419) (Ensifer medicae), this protein is UPF0283 membrane protein Smed_1530.